Reading from the N-terminus, the 118-residue chain is Small ribosomal subunit protein mS37 (118 aa).

The 43-residue stretch at glutamate 42–arginine 84 folds into the CHCH domain. 2 short sequence motifs (cx9C motif) span residues cysteine 45 to cysteine 55 and cysteine 66 to cysteine 76. 2 disulfide bridges follow: cysteine 45–cysteine 76 and cysteine 55–cysteine 66. Positions methionine 86 to threonine 105 are disordered. The segment covering isoleucine 89–leucine 99 has biased composition (polar residues).

It belongs to the mitochondrion-specific ribosomal protein mS37 family. Component of the mitochondrial ribosome small subunit (28S) which comprises a 12S rRNA and about 30 distinct proteins.

It localises to the mitochondrion. It is found in the nucleus. The sequence is that of Small ribosomal subunit protein mS37 (Chchd1) from Mus musculus (Mouse).